The primary structure comprises 689 residues: Protein SDA1 homolog (689 aa).

Positions 254–319 (KKNTKNKKKL…RFEVKLMHMD (66 aa)) form a coiled coil. Disordered regions lie at residues 485–512 (EQEKTEEPEEDDGWESASLSDDDEDGEW) and 606–689 (KPKS…RLMK). Positions 668–681 (SFRDKQIALRDSLL) are enriched in basic and acidic residues.

The protein belongs to the SDA1 family.

The protein localises to the nucleus. It localises to the nucleolus. Functionally, required for 60S pre-ribosomal subunits export to the cytoplasm. The protein is Protein SDA1 homolog (sdad1) of Xenopus tropicalis (Western clawed frog).